The following is a 105-amino-acid chain: Large ribosomal subunit protein uL24 (105 aa).

This sequence belongs to the universal ribosomal protein uL24 family. As to quaternary structure, part of the 50S ribosomal subunit.

In terms of biological role, one of two assembly initiator proteins, it binds directly to the 5'-end of the 23S rRNA, where it nucleates assembly of the 50S subunit. One of the proteins that surrounds the polypeptide exit tunnel on the outside of the subunit. The chain is Large ribosomal subunit protein uL24 from Thioalkalivibrio sulfidiphilus (strain HL-EbGR7).